The sequence spans 1044 residues: Protein ITPRID1 (1044 aa).

Residues 1–14 (MMAQKSQGSDNLQE) show a composition bias toward polar residues. Disordered regions lie at residues 1–20 (MMAQ…EKSK), 230–251 (EEKA…EHRR), 388–489 (MEEV…SSQE), and 583–607 (PEGA…HTQD). Positions 388–398 (MEEVQSFEEET) are enriched in acidic residues. Composition is skewed to polar residues over residues 460–469 (HSLVSSQDCQ) and 480–489 (RASMSFSSQE). Residues 896–937 (SRDMSEEEREEAEQLQTLREALRQQVAELEFQLGDRAQQIRE) adopt a coiled-coil conformation.

The chain is Protein ITPRID1 from Homo sapiens (Human).